Consider the following 344-residue polypeptide: Dihydroorotase (344 aa).

Residues histidine 13 and histidine 15 each coordinate Zn(2+). Residues 15–17 and asparagine 41 contribute to the substrate site; that span reads HLR. The Zn(2+) site is built by lysine 98, histidine 135, and histidine 173. An N6-carboxylysine modification is found at lysine 98. A substrate-binding site is contributed by histidine 135. Position 218 (leucine 218) interacts with substrate. Residue aspartate 247 participates in Zn(2+) binding. Aspartate 247 is an active-site residue. Histidine 251 and alanine 263 together coordinate substrate.

The protein belongs to the metallo-dependent hydrolases superfamily. DHOase family. Class II DHOase subfamily. As to quaternary structure, homodimer. Requires Zn(2+) as cofactor.

It carries out the reaction (S)-dihydroorotate + H2O = N-carbamoyl-L-aspartate + H(+). Its pathway is pyrimidine metabolism; UMP biosynthesis via de novo pathway; (S)-dihydroorotate from bicarbonate: step 3/3. Its function is as follows. Catalyzes the reversible cyclization of carbamoyl aspartate to dihydroorotate. This chain is Dihydroorotase, found in Neisseria gonorrhoeae (strain ATCC 700825 / FA 1090).